A 160-amino-acid polypeptide reads, in one-letter code: MTKEVIVESFELDHTIVKAPYVRLISEEFGPKGDVITNFDVRLVQPNQNSIETAGLHTIEHLLAKLIRQRIDGMIDCSPFGCRTGFHLIMWGEHSSTEIAKVIKSSLEEIADGISWEDVPGTTIESCGNYKDHSLFAAKEWAKLILSQGISDQAFERHLV.

Residues H57, H61, and C127 each contribute to the Fe cation site.

It belongs to the LuxS family. Homodimer. Requires Fe cation as cofactor.

It catalyses the reaction S-(5-deoxy-D-ribos-5-yl)-L-homocysteine = (S)-4,5-dihydroxypentane-2,3-dione + L-homocysteine. Involved in the synthesis of autoinducer 2 (AI-2) which is secreted by bacteria and is used to communicate both the cell density and the metabolic potential of the environment. The regulation of gene expression in response to changes in cell density is called quorum sensing. Catalyzes the transformation of S-ribosylhomocysteine (RHC) to homocysteine (HC) and 4,5-dihydroxy-2,3-pentadione (DPD). The polypeptide is S-ribosylhomocysteine lyase (Streptococcus uberis (strain ATCC BAA-854 / 0140J)).